We begin with the raw amino-acid sequence, 87 residues long: Small ribosomal subunit protein eS21 (87 aa).

It belongs to the eukaryotic ribosomal protein eS21 family. Component of the small ribosomal subunit. Mature ribosomes consist of a small (40S) and a large (60S) subunit. The 40S subunit contains about 33 different proteins and 1 molecule of RNA (18S). The 60S subunit contains about 49 different proteins and 3 molecules of RNA (25S, 5.8S and 5S).

It is found in the cytoplasm. In terms of biological role, required for the processing of the 20S rRNA-precursor to mature 18S rRNA in a late step of the maturation of 40S ribosomal subunits. Has a physiological role leading to 18S rRNA stability. The protein is Small ribosomal subunit protein eS21 (RPS21) of Candida albicans (Yeast).